Consider the following 309-residue polypeptide: Short chain dehydrogenase MYCFIDRAFT_6125 (309 aa).

Positions 43, 67, 88, and 150 each coordinate NADP(+). Residue serine 168 is the Proton donor of the active site. NADP(+)-binding residues include tyrosine 182, lysine 186, valine 215, and serine 217. Tyrosine 182 acts as the Proton acceptor in catalysis. The Lowers pKa of active site Tyr role is filled by lysine 186.

Belongs to the short-chain dehydrogenases/reductases (SDR) family.

It functions in the pathway secondary metabolite biosynthesis. In terms of biological role, short chain dehydrogenase; part of the gene cluster that mediates the biosynthesis of an emodin derivative that may be involved in black Sigatoka disease of banana. The pathway begins with the synthesis of atrochrysone thioester by the polyketide synthase PKS8-1. The atrochrysone carboxyl ACP thioesterase MYCFIDRAFT_190111 then breaks the thioester bond and releases the atrochrysone carboxylic acid from PKS8-1. The decarboxylase MYCFIDRAFT_34057 then catalyzes the concerted decarboxylation-elimination required to convert atochrysone carboxylic acid into emodin anthrone, which is further oxidized to emodin by the anthrone oxygenase MYCFIDRAFT_34418. The functions of the other tailoring enzymes as well as the final product of the cluster have still to be identified. The polypeptide is Short chain dehydrogenase MYCFIDRAFT_6125 (Pseudocercospora fijiensis (strain CIRAD86) (Black leaf streak disease fungus)).